We begin with the raw amino-acid sequence, 89 residues long: Pigment-dispersing hormone peptides (89 aa).

The N-terminal stretch at Met-1 to Gly-22 is a signal peptide. Ala-86 is modified (alanine amide).

It belongs to the arthropod PDH family.

It localises to the secreted. Functionally, capable of inducing pigment dispersion in the chromatophores of the fiddler crab Uca pugilator. The polypeptide is Pigment-dispersing hormone peptides (Romalea microptera (Eastern lubber grasshopper)).